The sequence spans 345 residues: Probable deoxyhypusine synthase 2 (345 aa).

Lys292 (nucleophile) is an active-site residue.

The protein belongs to the deoxyhypusine synthase family. NAD(+) is required as a cofactor.

It catalyses the reaction [eIF5A protein]-L-lysine + spermidine = [eIF5A protein]-deoxyhypusine + propane-1,3-diamine. The protein operates within protein modification; eIF5A hypusination. Its function is as follows. Catalyzes the NAD-dependent oxidative cleavage of spermidine and the subsequent transfer of the butylamine moiety of spermidine to the epsilon-amino group of a specific lysine residue of the eIF-5A precursor protein to form the intermediate deoxyhypusine residue. The chain is Probable deoxyhypusine synthase 2 (dys2) from Methanosarcina acetivorans (strain ATCC 35395 / DSM 2834 / JCM 12185 / C2A).